We begin with the raw amino-acid sequence, 485 residues long: GTPase Obg (485 aa).

The Obg domain occupies 2–159 (SKFIDRVVLH…RDLVLELKSV (158 aa)). Positions 64 to 84 (PHAKAGNGKPGEGGNRDGKMG) are disordered. The OBG-type G domain maps to 160-340 (ADVGLVGFPS…LTFALADLVR (181 aa)). Residues 166–173 (GFPSAGKS), 191–195 (FTTLV), 212–215 (DVPG), 292–295 (NKTD), and 321–323 (SAV) each bind GTP. Positions 173 and 193 each coordinate Mg(2+). Residues 358-438 (PIAVDESGFT…IGDVTFDWEP (81 aa)) form the OCT domain. The segment covering 457–469 (LEQSDRVSAAERK) has biased composition (basic and acidic residues). The tract at residues 457 to 485 (LEQSDRVSAAERKHASRVRRGLVEDDEQR) is disordered.

The protein belongs to the TRAFAC class OBG-HflX-like GTPase superfamily. OBG GTPase family. As to quaternary structure, monomer. Requires Mg(2+) as cofactor.

The protein resides in the cytoplasm. An essential GTPase which binds GTP, GDP and possibly (p)ppGpp with moderate affinity, with high nucleotide exchange rates and a fairly low GTP hydrolysis rate. Plays a role in control of the cell cycle, stress response, ribosome biogenesis and in those bacteria that undergo differentiation, in morphogenesis control. The sequence is that of GTPase Obg from Nocardia farcinica (strain IFM 10152).